The primary structure comprises 280 residues: Pantothenate synthetase (280 aa).

Residue 30-37 coordinates ATP; the sequence is MGALHEGH. His37 functions as the Proton donor in the catalytic mechanism. A (R)-pantoate-binding site is contributed by Gln61. Gln61 serves as a coordination point for beta-alanine. 147 to 150 contacts ATP; that stretch reads GQKD. Gln153 provides a ligand contact to (R)-pantoate. ATP contacts are provided by residues Val176 and 184–187; that span reads MSSR.

The protein belongs to the pantothenate synthetase family. In terms of assembly, homodimer.

It is found in the cytoplasm. It carries out the reaction (R)-pantoate + beta-alanine + ATP = (R)-pantothenate + AMP + diphosphate + H(+). Its pathway is cofactor biosynthesis; (R)-pantothenate biosynthesis; (R)-pantothenate from (R)-pantoate and beta-alanine: step 1/1. Its function is as follows. Catalyzes the condensation of pantoate with beta-alanine in an ATP-dependent reaction via a pantoyl-adenylate intermediate. The polypeptide is Pantothenate synthetase (Thermodesulfovibrio yellowstonii (strain ATCC 51303 / DSM 11347 / YP87)).